The following is an 86-amino-acid chain: Large ribosomal subunit protein bL31B (86 aa).

This sequence belongs to the bacterial ribosomal protein bL31 family. Type B subfamily. As to quaternary structure, part of the 50S ribosomal subunit.

The polypeptide is Large ribosomal subunit protein bL31B (Saccharopolyspora erythraea (strain ATCC 11635 / DSM 40517 / JCM 4748 / NBRC 13426 / NCIMB 8594 / NRRL 2338)).